We begin with the raw amino-acid sequence, 328 residues long: Homeobox protein Hox-C13 (328 aa).

A disordered region spans residues 23–48 (AAESGSGGGGGGGGAGGAGGGCSGAS). Gly residues predominate over residues 27 to 45 (GSGGGGGGGGAGGAGGGCS). The segment at residues 258–317 (GRKKRVPYTKVQLKELEKEYAASKFITKEKRRRISATTNLSERQVTIWFQNRRVKEKKVV) is a DNA-binding region (homeobox).

The protein belongs to the Abd-B homeobox family. As to expression, expressed in differentiating keratinocytes. In the hair follicle lower matrix, expressed in all 3 hair shaft-forming compartments, i.e. cuticle, cortex and medulla. Expression stops sharply at the boundary with the germinal matrix compartment.

The protein resides in the nucleus. In terms of biological role, transcription factor which plays a role in hair follicle differentiation. Regulates FOXQ1 expression and that of other hair-specific genes. The polypeptide is Homeobox protein Hox-C13 (Hoxc13) (Mus musculus (Mouse)).